Consider the following 549-residue polypeptide: Undecaprenyl phosphate-alpha-4-amino-4-deoxy-L-arabinose arabinosyl transferase (549 aa).

A run of 12 helical transmembrane segments spans residues 9-29 (LLLI…GLWI), 80-100 (LFGV…LAYL), 112-132 (SLAC…SGYA), 136-156 (PQFT…LDAG), 166-186 (ILLG…AWLL), 204-224 (LLGY…PWAL), 256-276 (PWWF…GLLP), 288-308 (QAPV…FSLS), 312-332 (LPTY…HALV), 346-366 (NGLL…YLQL), 376-396 (FELF…LAQW), and 402-422 (AWAA…AAMP).

Belongs to the glycosyltransferase 83 family.

The protein resides in the cell inner membrane. It carries out the reaction 4-amino-4-deoxy-alpha-L-arabinopyranosyl di-trans,octa-cis-undecaprenyl phosphate + lipid IVA = lipid IIA + di-trans,octa-cis-undecaprenyl phosphate.. The protein operates within lipopolysaccharide metabolism; 4-amino-4-deoxy-beta-L-arabinose-lipid A biosynthesis. Catalyzes the transfer of the L-Ara4N moiety of the glycolipid undecaprenyl phosphate-alpha-L-Ara4N to lipid A. The modified arabinose is attached to lipid A and is required for resistance to polymyxin and cationic antimicrobial peptides. The polypeptide is Undecaprenyl phosphate-alpha-4-amino-4-deoxy-L-arabinose arabinosyl transferase (Pseudomonas aeruginosa (strain UCBPP-PA14)).